Here is an 89-residue protein sequence, read N- to C-terminus: Putative regulatory protein CYA_2696 (89 aa).

The protein belongs to the RemA family.

This is Putative regulatory protein CYA_2696 from Synechococcus sp. (strain JA-3-3Ab) (Cyanobacteria bacterium Yellowstone A-Prime).